The following is a 479-amino-acid chain: Solute carrier family 46 member 2 (479 aa).

The Cytoplasmic portion of the chain corresponds to 1-23 (MGPGGTCPWSSRLSGFRVRTWIE). Residues 24–44 (PVVASTQVAGSLYDAGLLLVV) form a helical membrane-spanning segment. The Extracellular segment spans residues 45 to 80 (KESFKSEAGGSSNYSANQSLVEYQEDQQQKAISNFN). N-linked (GlcNAc...) asparagine glycosylation is found at asparagine 57 and asparagine 61. A helical transmembrane segment spans residues 81-101 (IIYNLVLGLTPLLSAYGLGWL). Residues 102–110 (SDRYHRKIS) lie on the Cytoplasmic side of the membrane. The chain crosses the membrane as a helical span at residues 111–131 (ICTAMLGFLLSRIGLLLKVML). Topologically, residues 132 to 140 (DWPVEVMYG) are extracellular. The chain crosses the membrane as a helical span at residues 141–161 (AAALNGLCGSFSAYWSGVMAL). At 162–174 (GSLGCSEGRRSVR) the chain is on the cytoplasmic side. The chain crosses the membrane as a helical span at residues 175–195 (LILIDLVLGLAGFSGSMASGH). Topologically, residues 196–207 (LFKQIVGHSAQG) are extracellular. A helical membrane pass occupies residues 208-228 (LLLTACSVGCAAFALFYSLFV). The Cytoplasmic segment spans residues 229-281 (LKVPESKPNKVHPTVDTVSGMMGTYRTLDPDQQDKQNVPRNPRTPGKGKSSQR). A disordered region spans residues 255-277 (TLDPDQQDKQNVPRNPRTPGKGK). Residues 282–302 (EVVALLFVGAIIYDLAAVGTV) traverse the membrane as a helical segment. The Extracellular segment spans residues 303–321 (DVMALFVLKEPLHWNQVQL). Residues 322-342 (GYGMASGYIIFITSFLGVLVF) form a helical membrane-spanning segment. Residues 343 to 348 (SRCFRD) are Cytoplasmic-facing. A helical membrane pass occupies residues 349 to 369 (TTMIIIGMLSFGSGALLLAFV). The Extracellular portion of the chain corresponds to 370 to 371 (KE). A helical transmembrane segment spans residues 372–392 (TYMFYIARAIMLFALIPITTI). The Cytoplasmic portion of the chain corresponds to 393 to 407 (RSAMSKLIKDSSYGK). The chain crosses the membrane as a helical span at residues 408–428 (IFVILQLCLTLTGVVTSTIYN). Residues 429 to 441 (KIYQLTLDKFIGT) are Extracellular-facing. A helical membrane pass occupies residues 442–462 (CFVLSSFLSFLAIVPIGVVAY). Over 463–479 (KQVPRSQQGECAEKQRS) the chain is Cytoplasmic.

The protein belongs to the major facilitator superfamily. SLC46A family. Post-translationally, glycosylated. Expressed on cortical epithelial cells in the thymus. Mainly expressed in the thymic cortex and is highly enriched in SCID thymus. Also expressed in lymph nodes, heart, fetal liver, brain, spleen, intestine and kidney, but not in adult liver, skin, skeletal muscle and lung. Expressed in skin epidermis.

It localises to the endosome membrane. Its subcellular location is the cell membrane. The catalysed reaction is N-acetyl-beta-D-glucosaminyl-(1-&gt;4)-1,6-anhydro-N-acetyl-beta-D-muramoyl-L-alanyl-gamma-D-glutamyl-meso-2,6-diaminopimeloyl-D-alanine(out) + n H(+)(out) = N-acetyl-beta-D-glucosaminyl-(1-&gt;4)-1,6-anhydro-N-acetyl-beta-D-muramoyl-L-alanyl-gamma-D-glutamyl-meso-2,6-diaminopimeloyl-D-alanine(in) + n H(+)(in). It catalyses the reaction L-alanyl-gamma-D-glutamyl-meso-2,6-diaminopimelate(out) + n H(+)(out) = L-alanyl-gamma-D-glutamyl-meso-2,6-diaminopimelate(in) + n H(+)(in). It carries out the reaction N-acetyl-D-muramoyl-L-alanyl-D-isoglutamine(out) + n H(+)(out) = N-acetyl-D-muramoyl-L-alanyl-D-isoglutamine(in) + n H(+)(in). The enzyme catalyses 2',3'-cGAMP(out) + n H(+)(out) = 2',3'-cGAMP(in) + n H(+)(in). The catalysed reaction is 3',3'-cGAMP(out) + n H(+)(out) = 3',3'-cGAMP(in) + n H(+)(in). With respect to regulation, down-regulated by the anti-inflammatory drug methotrexate. Its function is as follows. Proton-coupled transporter that delivers pathogen-associated or danger-associated molecular patterns to cytosolic pattern recognition receptors as part of the innate immune response to microbes or tissue injury. Has selectivity toward muropeptides that contain the amino acid diaminopimelic acid (DAP-type peptidoglycan muropeptides) including Tri-DAP and tracheal toxin (TCT), common in Gram-negative bacteria and Gram-positive bacilli. In the context of immune recognition of skin microbiota, shuttles bacterial muropeptides across the endolysosomal membranes into the cytosol for recognition by NOD1, triggering MYD88-dependent secretion of IL1A and neutrophil recruitment in a pyroptosis-type inflammatory process. To a lesser extent and redundantly, transports muramyl dipeptides derived from most bacterial proteoglycans, eliciting NOD2 receptor activation and downstream inflammatory responses. Postulated to function as an importer of cyclic GMP-AMP dinucleotides (cGAMPs) in monocyte and macrophage cell lineages. Selectively imports cGAMPs derived from pathogenic bacteria such as 3'3'-cGAMP thus providing for differential immune recognition of pathogenic versus commensal bacteria. During tumorigenesis may transport extracellular tumor-derived 2'3'-cGAMP across the plasma membrane of M1-polarized macrophages to activate the anti-tumoral stimulator of interferon genes (STING) pathway. The transport mechanism, its electrogenicity and stoichiometry remain to be elucidated. The protein is Solute carrier family 46 member 2 of Mus musculus (Mouse).